A 127-amino-acid polypeptide reads, in one-letter code: Glycine cleavage system H protein (127 aa).

The 83-residue stretch at 22–104 (KVRIGITHFA…YEKAWMIVVE (83 aa)) folds into the Lipoyl-binding domain. Lysine 63 carries the N6-lipoyllysine modification.

The protein belongs to the GcvH family. In terms of assembly, the glycine cleavage system is composed of four proteins: P, T, L and H. Requires (R)-lipoate as cofactor.

The glycine cleavage system catalyzes the degradation of glycine. The H protein shuttles the methylamine group of glycine from the P protein to the T protein. In terms of biological role, is also involved in protein lipoylation via its role as an octanoyl/lipoyl carrier protein intermediate. This Bacillus pumilus (strain SAFR-032) protein is Glycine cleavage system H protein.